The primary structure comprises 188 residues: Peptidyl-tRNA hydrolase (188 aa).

A tRNA-binding site is contributed by tyrosine 15. Histidine 20 functions as the Proton acceptor in the catalytic mechanism. Residues phenylalanine 66, asparagine 68, and asparagine 114 each contribute to the tRNA site.

It belongs to the PTH family. Monomer.

It is found in the cytoplasm. It carries out the reaction an N-acyl-L-alpha-aminoacyl-tRNA + H2O = an N-acyl-L-amino acid + a tRNA + H(+). Functionally, hydrolyzes ribosome-free peptidyl-tRNAs (with 1 or more amino acids incorporated), which drop off the ribosome during protein synthesis, or as a result of ribosome stalling. Catalyzes the release of premature peptidyl moieties from peptidyl-tRNA molecules trapped in stalled 50S ribosomal subunits, and thus maintains levels of free tRNAs and 50S ribosomes. The sequence is that of Peptidyl-tRNA hydrolase from Lactococcus lactis subsp. cremoris (strain MG1363).